The sequence spans 97 residues: Late embryogenesis abundant protein Lea5 (97 aa).

The protein belongs to the LEA type 3 family.

The chain is Late embryogenesis abundant protein Lea5 (LEA5) from Citrus sinensis (Sweet orange).